Here is a 470-residue protein sequence, read N- to C-terminus: Low molecular weight neuronal intermediate filament (470 aa).

Residues 1–91 (MTSRELYTSS…KIVRTNEKEQ (91 aa)) are head. The 312-residue stretch at 88–399 (EKEQLQGLND…KLLEGEETRL (312 aa)) folds into the IF rod domain. Positions 91–123 (QLQGLNDRFVTYIEKVHHLEQQNKLLESEVTLL) are coil 1A. Positions 121–136 (TLLRQKHSEPSRLSHI) are linker 1. Positions 137 to 232 (YEQEIRELRS…KVHEEEIAEL (96 aa)) are coil 1B. The interval 233–251 (QASVQEAQISVEMDVVSKP) is linker 12. The segment at 252 to 270 (DLTAALKEIRMQYEVLSAR) is coil 2A. A linker 2 region spans residues 271–279 (NQQSSEEWY). Residues 280–395 (QAKIANVSLE…AAYRKLLEGE (116 aa)) are coil 2B. Positions 396–470 (ETRLTSVGGG…EKISQKAAAN (75 aa)) are tail. The span at 414 to 431 (FSSGSYSGGRSSTTSTIS) shows a compositional bias: low complexity. The segment at 414–470 (FSSGSYSGGRSSTTSTISIRKEEKKESPEGGKGGSSGQPKTSKPGDQEKISQKAAAN) is disordered. Basic and acidic residues predominate over residues 432-442 (IRKEEKKESPE).

Belongs to the intermediate filament family. Nervous system; in axons in the PNS and in small perikarya in the dorsal root ganglion.

This chain is Low molecular weight neuronal intermediate filament, found in Xenopus laevis (African clawed frog).